The primary structure comprises 88 residues: Large ribosomal subunit protein bL31B (88 aa).

The protein belongs to the bacterial ribosomal protein bL31 family. Type B subfamily. Part of the 50S ribosomal subunit.

The polypeptide is Large ribosomal subunit protein bL31B (Glaesserella parasuis serovar 5 (strain SH0165) (Haemophilus parasuis)).